The sequence spans 625 residues: UvrABC system protein C (625 aa).

The GIY-YIG domain maps to 26–105; sequence LEPGVYFLRD…IKQHQPHFNT (80 aa). The region spanning 215-250 is the UVR domain; sequence GELLEKLATKMLAASENLDFEQAATIRDQIRGLQAL.

The protein belongs to the UvrC family. In terms of assembly, interacts with UvrB in an incision complex.

The protein localises to the cytoplasm. Its function is as follows. The UvrABC repair system catalyzes the recognition and processing of DNA lesions. UvrC both incises the 5' and 3' sides of the lesion. The N-terminal half is responsible for the 3' incision and the C-terminal half is responsible for the 5' incision. This is UvrABC system protein C from Microcystis aeruginosa (strain NIES-843 / IAM M-2473).